The primary structure comprises 440 residues: Xylose isomerase (440 aa).

Residues H100 and D103 contribute to the active site. The Mg(2+) site is built by E231, E267, H270, D295, D306, D308, and D338.

The protein belongs to the xylose isomerase family. In terms of assembly, homotetramer. Mg(2+) is required as a cofactor.

Its subcellular location is the cytoplasm. It carries out the reaction alpha-D-xylose = alpha-D-xylulofuranose. This Burkholderia ambifaria (strain MC40-6) protein is Xylose isomerase.